Consider the following 64-residue polypeptide: DNA gyrase inhibitor YacG (64 aa).

4 residues coordinate Zn(2+): Cys-9, Cys-12, Cys-28, and Cys-32. The segment at 45–64 (KRIPSAGDLSDSDDWSEQQP) is disordered. Over residues 54–64 (SDSDDWSEQQP) the composition is skewed to acidic residues.

The protein belongs to the DNA gyrase inhibitor YacG family. In terms of assembly, interacts with GyrB. Zn(2+) is required as a cofactor.

Inhibits all the catalytic activities of DNA gyrase by preventing its interaction with DNA. Acts by binding directly to the C-terminal domain of GyrB, which probably disrupts DNA binding by the gyrase. In Klebsiella pneumoniae subsp. pneumoniae (strain ATCC 700721 / MGH 78578), this protein is DNA gyrase inhibitor YacG.